A 157-amino-acid polypeptide reads, in one-letter code: Probable succinate transporter subunit YjjB (157 aa).

4 consecutive transmembrane segments (helical) span residues 8 to 28, 50 to 70, 87 to 107, and 129 to 149; these read LALA…AMVF, MILM…SMLG, VFTV…TAMI, and FLTA…PGLW.

It belongs to the ThrE exporter (TC 2.A.79) family. In terms of assembly, the transporter is composed of YjjB and YjjP.

It is found in the cell inner membrane. In terms of biological role, involved in succinate export with YjjP. Both proteins are required for export. This is Probable succinate transporter subunit YjjB from Escherichia coli O157:H7 (strain EC4115 / EHEC).